We begin with the raw amino-acid sequence, 425 residues long: Serine hydroxymethyltransferase 2 (425 aa).

Residues Leu-121 and 125-127 each bind (6S)-5,6,7,8-tetrahydrofolate; that span reads GHL. Position 230 is an N6-(pyridoxal phosphate)lysine (Lys-230).

It belongs to the SHMT family. As to quaternary structure, homodimer. The cofactor is pyridoxal 5'-phosphate.

The protein localises to the cytoplasm. It catalyses the reaction (6R)-5,10-methylene-5,6,7,8-tetrahydrofolate + glycine + H2O = (6S)-5,6,7,8-tetrahydrofolate + L-serine. It participates in one-carbon metabolism; tetrahydrofolate interconversion. It functions in the pathway amino-acid biosynthesis; glycine biosynthesis; glycine from L-serine: step 1/1. Its function is as follows. Catalyzes the reversible interconversion of serine and glycine with tetrahydrofolate (THF) serving as the one-carbon carrier. This reaction serves as the major source of one-carbon groups required for the biosynthesis of purines, thymidylate, methionine, and other important biomolecules. Also exhibits THF-independent aldolase activity toward beta-hydroxyamino acids, producing glycine and aldehydes, via a retro-aldol mechanism. This is Serine hydroxymethyltransferase 2 from Mycobacterium bovis (strain ATCC BAA-935 / AF2122/97).